The chain runs to 380 residues: MADKAFHTRLINMRRDLHEHPELSFQEVETTKKIRRWLEEEQIEILDVPQLKTGVIAEIKGREDGPVIAIRADIDALPIQEQTNLPFASKVDGTMHACGHDFHTASIIGTAMLLNQRRAELKGTVRFIFQPAEEIAAGARKVLEAGVLNGVSAIFGMHNKPDLPVGTIGVKEGPLMASVDRFEIVIKGKGGHAGIPNNSIDPIAAAGQIISGLQSVVSRNISSLQNAVVSITRVQAGTSWNVIPDQAEMEGTVRTFQKEARQAVPEHMRRVAEGIAAGYGAQAEFKWFPYLPSVQNDGTFLNAASEAAARLGYQTVHAEQSPGGEDFALYQEKIPGFFVWMGTNGTEEWHHPAFTLDEEALTVASQYFAELAVIVLETIK.

5 residues coordinate Ni(2+): cysteine 98, histidine 100, glutamate 134, histidine 158, and histidine 350.

It belongs to the peptidase M20 family. Requires a divalent metal cation as cofactor.

The enzyme catalyses N-acetyl-L-cysteine + H2O = L-cysteine + acetate. It functions in the pathway amino-acid biosynthesis; L-cysteine biosynthesis. Functionally, probably catalyzes the deacetylation of N-acetylcysteine (NAC) to acetate and cysteine. Is involved in a S-(2-succino)cysteine (2SC) degradation pathway that allows B.subtilis to grow on 2SC as a sole sulfur source, via its metabolization to cysteine. This is N-acetylcysteine deacetylase from Bacillus subtilis (strain 168).